The sequence spans 534 residues: Serine/threonine-protein kinase Nek6 (534 aa).

Positions 4 to 257 (YEVVEQIGRG…AGELLRHPYL (254 aa)) constitute a Protein kinase domain. ATP is bound by residues 10-18 (IGRGAYGSA) and lysine 33. Catalysis depends on aspartate 129, which acts as the Proton acceptor. 2 disordered regions span residues 278-306 (KSNLGDKQQSRKPGSGRKRIIKTNGSSEA) and 425-449 (KAHTHQGSKPGTGDVPIVTEESSPK).

It belongs to the protein kinase superfamily. NEK Ser/Thr protein kinase family. NIMA subfamily. Interacts with DIS1. In terms of processing, ubiquitinated by the E3 ligase DIS1. Ubiquitination of NEK6 leads to its degradation via the 26S proteasome-dependent pathway. Expressed in anthers, pistils and leaves.

It is found in the cytoplasm. It carries out the reaction L-seryl-[protein] + ATP = O-phospho-L-seryl-[protein] + ADP + H(+). The enzyme catalyses L-threonyl-[protein] + ATP = O-phospho-L-threonyl-[protein] + ADP + H(+). Its function is as follows. May be involved in plant development processes. The chain is Serine/threonine-protein kinase Nek6 from Oryza sativa subsp. japonica (Rice).